The chain runs to 431 residues: Forkhead box protein P3 (431 aa).

Residues 1-68 form a disordered region; it reads MPNPRPGKPS…SSLNPMPPSQ (68 aa). Over residues 10 to 25 the composition is skewed to low complexity; the sequence is SAPSLALGPSPGASPS. Ser19 is modified (phosphoserine; by CDK2). Residue Lys31 is modified to N6-acetyllysine. Positions 68 to 76 match the Nuclear export signal motif; that stretch reads QLQLPTLPL. The short motif at 92–96 is the LXXLL motif element; it reads LQALL. An essential for transcriptional repressor activity and for interaction with KAT5 and HDAC7 region spans residues 106 to 190; sequence LSTVDAHART…STLSAVPQSS (85 aa). The segment at 106 to 198 is interaction with ZFP90; it reads LSTVDAHART…SSYPLLANGV (93 aa). Positions 149-199 are interaction with IKZF4; that stretch reads LPPGINVASLEWVSREPALLCTFPNPSAPRKDSTLSAVPQSSYPLLANGVC. A C2H2-type zinc finger spans residues 197-222; the sequence is GVCKWPGCEKVFEEPEDFLKHCQADH. Residues 239 to 248 carry the Nuclear export signal motif; it reads VQSLEQQLVL. The leucine-zipper stretch occupies residues 239–260; it reads VQSLEQQLVLEKEKLSAMQAHL. Glycyl lysine isopeptide (Lys-Gly) (interchain with G-Cter in ubiquitin) cross-links involve residues Lys250 and Lys252. An N6-acetyllysine; alternate mark is found at Lys263 and Lys268. Glycyl lysine isopeptide (Lys-Gly) (interchain with G-Cter in ubiquitin); alternate cross-links involve residues Lys263 and Lys268. Residues 278-336 are interaction with RUNX1; sequence GSCCIVAAGSQGPVVPAWSGPREAPDSLFAVRRHLWGSHGNSTFPEFLHNMDYFKFHNM. A DNA-binding region (fork-head) is located at residues 337 to 423; the sequence is RPPFTYATLI…RKKRSQRPSR (87 aa). Lys393 participates in a covalent cross-link: Glycyl lysine isopeptide (Lys-Gly) (interchain with G-Cter in ubiquitin). The short motif at 414–417 is the Nuclear localization signal element; the sequence is RKKR. Ser418 is modified (phosphoserine). A propeptide spanning residues 418–431 is cleaved from the precursor; it reads SQRPSRCSNPTPGP.

In terms of assembly, homodimer. Dimerization is essential for its transcriptional regulator activity. Interacts with IKZF3. Isoform 1 (via LXXLL motif), but not isoform 2, interacts with isoform 4 of RORA (via AF-2 motif). Interacts with STUB1, HSPA8 and HSPA1A/B. Interacts with PPP1CA, PPP1CB and PPP1CG. Interacts with KAT5 and HDAC7. Interacts with HDAC9 in the absence of T-cell stimulation. Interacts with USP7. Interacts with isoform 2 of ZFP90 and can form a complex with TRIM28 in the presence of isoform 2 of ZFP90. Interacts with RUNX1. Interacts with RORC. Interacts with RELA and NFATC2. Interacts with RUNX2, RUNX3 and IKZF4. Post-translationally, polyubiquitinated, leading to its proteasomal degradation in regulatory T-cells (Treg) which is mediated by STUB1 in a HSPA1A/B-dependent manner. Deubiquitinated by USP7 and USP44; leading to increase in protein stability. Phosphorylation at Ser-418 regulates its transcriptional repressor activity and consequently, regulatory T-cells (Treg) suppressive function. Dephosphorylated at Ser-418 by protein phosphatase 1 (PP1) in Treg cells derived from patients with rheumatoid arthritis. Phosphorylation by CDK2 negatively regulates its transcriptional activity and protein stability. In terms of processing, acetylation on lysine residues stabilizes FOXP3 and promotes differentiation of T-cells into induced regulatory T-cells (iTregs) associated with suppressive functions. Acetylation is mediated by a coordinated action of KAT5 and EP300/p300 acetyltransferases: EP300/p300 is required to enhance KAT5 autoacetylation, promoting acetylation of FOXP3 by KAT5. Deacetylated by SIRT1. Post-translationally, undergoes proteolytic cleavage in activated regulatory T-cells (Treg), and can be cleaved at either the N- or C-terminal site, or at both sites.

It is found in the nucleus. The protein localises to the cytoplasm. Functionally, transcriptional regulator which is crucial for the development and inhibitory function of regulatory T-cells (Treg). Plays an essential role in maintaining homeostasis of the immune system by allowing the acquisition of full suppressive function and stability of the Treg lineage, and by directly modulating the expansion and function of conventional T-cells. Can act either as a transcriptional repressor or a transcriptional activator depending on its interactions with other transcription factors, histone acetylases and deacetylases. The suppressive activity of Treg involves the coordinate activation of many genes, including CTLA4 and TNFRSF18 by FOXP3 along with repression of genes encoding cytokines such as interleukin-2 (IL2) and interferon-gamma (IFNG). Inhibits cytokine production and T-cell effector function by repressing the activity of two key transcription factors, RELA and NFATC2. Mediates transcriptional repression of IL2 via its association with histone acetylase KAT5 and histone deacetylase HDAC7. Can activate the expression of TNFRSF18, IL2RA and CTLA4 and repress the expression of IL2 and IFNG via its association with transcription factor RUNX1. Inhibits the differentiation of IL17 producing helper T-cells (Th17) by antagonizing RORC function, leading to down-regulation of IL17 expression, favoring Treg development. Inhibits the transcriptional activator activity of RORA. Can repress the expression of IL2 and IFNG via its association with transcription factor IKZF4. This chain is Forkhead box protein P3 (FOXP3), found in Homo sapiens (Human).